A 501-amino-acid chain; its full sequence is Beta-secretase 1 (501 aa).

The N-terminal stretch at 1 to 21 (MAQALPWLLLWMGAGVLPAHG) is a signal peptide. A propeptide spanning residues 22–45 (TQHGIRLPLRSGLGGAPLGLRLPR) is cleaved from the precursor. The Extracellular portion of the chain corresponds to 22 to 457 (TQHGIRLPLR…PQTDESTLMT (436 aa)). Positions 39-58 (LGLRLPRETDEEPEEPGRRG) are disordered. One can recognise a Peptidase A1 domain in the interval 75–416 (YYVEMTVGSP…DRARKRIGFA (342 aa)). Asp-93 is a catalytic residue. Lys-126 is modified (N6-acetyllysine). N-linked (GlcNAc...) asparagine glycans are attached at residues Asn-153, Asn-172, and Asn-223. 3 disulfide bridges follow: Cys-216–Cys-420, Cys-278–Cys-443, and Cys-330–Cys-380. N6-acetyllysine is present on residues Lys-275, Lys-279, and Lys-285. The active site involves Asp-289. An N6-acetyllysine mark is found at Lys-299, Lys-300, and Lys-307. Asn-354 carries N-linked (GlcNAc...) asparagine glycosylation. Residues 458–478 (IAYVMAAICALFMLPLCLMVC) form a helical membrane-spanning segment. Residues Cys-474, Cys-478, Cys-482, and Cys-485 are each lipidated (S-palmitoyl cysteine). Residues 479 to 501 (QWRCLRCLRQQHDDFADDISLLK) are Cytoplasmic-facing. The segment at 479–501 (QWRCLRCLRQQHDDFADDISLLK) is interaction with RTN3. The DXXLL motif lies at 496 to 500 (DISLL). Ser-498 is modified (phosphoserine). A Glycyl lysine isopeptide (Lys-Gly) (interchain with G-Cter in ubiquitin) cross-link involves residue Lys-501.

Belongs to the peptidase A1 family. In terms of assembly, monomer. Interacts (via DXXLL motif) with GGA1, GGA2 and GGA3 (via their VHS domain); the interaction highly increases when BACE1 is phosphorylated at Ser-498. Interacts with RTN1; RTN2; RTN3 and RTN4; the interaction leads to inhibition of amyloid precursor protein processing. Interacts with SNX6. Interacts with PCSK9. Interacts with NAT8 and NAT8B. Interacts with BIN1. Interacts (via extracellular domain) with ADAM10 (via extracellular domain). Interacts with SORL1; this interaction may affect binding with APP and hence reduce APP cleavage. Interacts with NRDC AND NRG1. Post-translationally, N-Glycosylated. Addition of a bisecting N-acetylglucosamine by MGAT3 blocks lysosomal targeting, further degradation and is required for maintaining stability under stress conditions. Acetylated in the endoplasmic reticulum at Lys-126, Lys-275, Lys-279, Lys-285, Lys-299, Lys-300 and Lys-307. Acetylation by NAT8 and NAT8B is transient and deacetylation probably occurs in the Golgi. Acetylation regulates the maturation, the transport to the plasma membrane, the stability and the expression of the protein. In terms of processing, palmitoylation mediates lipid raft localization. Post-translationally, ubiquitinated at Lys-501, ubiquitination leads to lysosomal degradation. Monoubiquitinated and 'Lys-63'-linked polyubitinated. Deubiquitnated by USP8; inhibits lysosomal degradation. Phosphorylation at Ser-498 is required for interaction with GGA1 and retrograded transport from endosomal compartments to the trans-Golgi network. Non-phosphorylated BACE1 enters a direct recycling route to the cell surface. As to expression, expressed at high levels in the brain and pancreas. In the brain, expression is highest in the substantia nigra, locus coruleus and medulla oblongata.

Its subcellular location is the cell membrane. It localises to the golgi apparatus. It is found in the trans-Golgi network. The protein localises to the endoplasmic reticulum. The protein resides in the endosome. Its subcellular location is the cell surface. It localises to the cytoplasmic vesicle membrane. It is found in the membrane raft. The protein localises to the lysosome. The protein resides in the late endosome. Its subcellular location is the early endosome. It localises to the recycling endosome. It is found in the cell projection. The protein localises to the axon. The protein resides in the dendrite. It catalyses the reaction Broad endopeptidase specificity. Cleaves Glu-Val-Asn-Leu-|-Asp-Ala-Glu-Phe in the Swedish variant of Alzheimer's amyloid precursor protein.. Its activity is regulated as follows. Inhibited by RTN3 and RTN4. Functionally, responsible for the proteolytic processing of the amyloid precursor protein (APP). Cleaves at the N-terminus of the A-beta peptide sequence, between residues 671 and 672 of APP, leads to the generation and extracellular release of beta-cleaved soluble APP, and a corresponding cell-associated C-terminal fragment which is later released by gamma-secretase. Cleaves CHL1. This chain is Beta-secretase 1, found in Homo sapiens (Human).